Consider the following 813-residue polypeptide: Phosphoribosylformylglycinamidine synthase subunit PurL (813 aa).

Histidine 56 is an active-site residue. Residues tyrosine 59 and lysine 103 each contribute to the ATP site. Residue glutamate 105 participates in Mg(2+) binding. Residues 106–109 (SHNH) and arginine 128 each bind substrate. Histidine 107 functions as the Proton acceptor in the catalytic mechanism. Aspartate 129 serves as a coordination point for Mg(2+). A substrate-binding site is contributed by glutamine 253. Position 281 (aspartate 281) interacts with Mg(2+). Residue 325–327 (ESQ) participates in substrate binding. Asparagine 511 and glycine 548 together coordinate ATP. Residue asparagine 549 participates in Mg(2+) binding. Serine 551 lines the substrate pocket.

The protein belongs to the FGAMS family. In terms of assembly, monomer. Part of the FGAM synthase complex composed of 1 PurL, 1 PurQ and 2 PurS subunits.

It is found in the cytoplasm. It catalyses the reaction N(2)-formyl-N(1)-(5-phospho-beta-D-ribosyl)glycinamide + L-glutamine + ATP + H2O = 2-formamido-N(1)-(5-O-phospho-beta-D-ribosyl)acetamidine + L-glutamate + ADP + phosphate + H(+). The protein operates within purine metabolism; IMP biosynthesis via de novo pathway; 5-amino-1-(5-phospho-D-ribosyl)imidazole from N(2)-formyl-N(1)-(5-phospho-D-ribosyl)glycinamide: step 1/2. Part of the phosphoribosylformylglycinamidine synthase complex involved in the purines biosynthetic pathway. Catalyzes the ATP-dependent conversion of formylglycinamide ribonucleotide (FGAR) and glutamine to yield formylglycinamidine ribonucleotide (FGAM) and glutamate. The FGAM synthase complex is composed of three subunits. PurQ produces an ammonia molecule by converting glutamine to glutamate. PurL transfers the ammonia molecule to FGAR to form FGAM in an ATP-dependent manner. PurS interacts with PurQ and PurL and is thought to assist in the transfer of the ammonia molecule from PurQ to PurL. The polypeptide is Phosphoribosylformylglycinamidine synthase subunit PurL (Corynebacterium jeikeium (strain K411)).